Here is a 41-residue protein sequence, read N- to C-terminus: Large ribosomal subunit protein bL36B (41 aa).

This sequence belongs to the bacterial ribosomal protein bL36 family.

The polypeptide is Large ribosomal subunit protein bL36B (Neisseria meningitidis serogroup C (strain 053442)).